A 156-amino-acid polypeptide reads, in one-letter code: Small ribosomal subunit protein uS7 (156 aa).

The protein belongs to the universal ribosomal protein uS7 family. In terms of assembly, part of the 30S ribosomal subunit. Contacts proteins S9 and S11.

Its function is as follows. One of the primary rRNA binding proteins, it binds directly to 16S rRNA where it nucleates assembly of the head domain of the 30S subunit. Is located at the subunit interface close to the decoding center, probably blocks exit of the E-site tRNA. The chain is Small ribosomal subunit protein uS7 from Proteus mirabilis (strain HI4320).